The following is a 509-amino-acid chain: Scavenger receptor class B member 1 (509 aa).

Residues 1–11 (MGGSSRARWVA) lie on the Cytoplasmic side of the membrane. Residues 12–32 (LGLGALGLLFAALGVVMILMV) form a helical membrane-spanning segment. Residues 33–440 (PSLIKQQVLK…YTQLVLMPQV (408 aa)) are Extracellular-facing. Residues N102, N108, N116, N173, N212, N227, N255, N288, N310, N330, and N383 are each glycosylated (N-linked (GlcNAc...) asparagine). A disulfide bridge links C251 with C384. Residues 441–461 (LHYAQYVLLGLGGLLLLVPII) form a helical membrane-spanning segment. The S-palmitoyl cysteine moiety is linked to residue C462. At 462–509 (CQLRSQEKCFLFWSGSKKGSQDKEAIQAYSESLMSPAAKGTVLQEAKL) the chain is on the cytoplasmic side.

This sequence belongs to the CD36 family. As to quaternary structure, the C-terminal region binds to PDZK1. In terms of processing, N-glycosylated. Post-translationally, the six cysteines of the extracellular domain are all involved in intramolecular disulfide bonds. In terms of tissue distribution, expressed primarily in liver, ovary and adrenal gland, and, at lower levels in other non-placental steroidogenic tissues, including adipose tissue, mammary gland and testis (at protein level). Isoform 2 is expressed at lower levels than isoform 1 in liver, testis and adrenal gland. At the mRNA, but not at the protein level, isoform 2 is the predominant isoform in testis (80%).

The protein resides in the cell membrane. It localises to the membrane. It is found in the caveola. In terms of biological role, receptor for different ligands such as phospholipids, cholesterol ester, lipoproteins, phosphatidylserine and apoptotic cells. Both isoform 1 and isoform 2 act as receptors for HDL, mediating selective uptake of cholesteryl ether and HDL-dependent cholesterol efflux. Also facilitates the flux of free and esterified cholesterol between the cell surface and apoB-containing lipoproteins and modified lipoproteins, although less efficiently than HDL. May be involved in the phagocytosis of apoptotic cells, via its phosphatidylserine binding activity. The chain is Scavenger receptor class B member 1 (Scarb1) from Mus musculus (Mouse).